The sequence spans 187 residues: Protein TIFY 11b (187 aa).

In terms of domain architecture, Tify spans 68–103; that stretch reads ATAPAAPLTIFYGGRMVVFEDFPADKAAEVMRMASS. The short motif at 121-145 is the Jas element; sequence PIMRKASLQRFFAKRKDRLAATTPY. The short motif at 123-130 is the Nuclear localization signal element; sequence MRKASLQR. Positions 139–168 are disordered; it reads LAATTPYARPSPAETKASEPEEKKTPTSWL. Over residues 154–163 the composition is skewed to basic and acidic residues; it reads KASEPEEKKT.

The protein belongs to the TIFY/JAZ family. As to quaternary structure, interacts with COI1B in a coronatine-dependent manner. Coronatine is an analog of jasmonoyl isoleucine (JA-Ile). In terms of processing, ubiquitinated. Targeted for degradation by the SCF(COI1) E3 ubiquitin ligase-proteasome pathway during jasmonate signaling.

It localises to the nucleus. Functionally, repressor of jasmonate responses. This chain is Protein TIFY 11b, found in Oryza sativa subsp. japonica (Rice).